A 137-amino-acid chain; its full sequence is Small ribosomal subunit protein uS12 (137 aa).

Disordered regions lie at residues 1 to 21 and 34 to 57; these read MPTINQLVRKPRKSKIEKSDS and VHTKIAAPQKRGVATRVGTMTPKK. Asp102 is modified (3-methylthioaspartic acid).

Belongs to the universal ribosomal protein uS12 family. Part of the 30S ribosomal subunit. Contacts proteins S8 and S17. May interact with IF1 in the 30S initiation complex.

Its function is as follows. With S4 and S5 plays an important role in translational accuracy. In terms of biological role, interacts with and stabilizes bases of the 16S rRNA that are involved in tRNA selection in the A site and with the mRNA backbone. Located at the interface of the 30S and 50S subunits, it traverses the body of the 30S subunit contacting proteins on the other side and probably holding the rRNA structure together. The combined cluster of proteins S8, S12 and S17 appears to hold together the shoulder and platform of the 30S subunit. This chain is Small ribosomal subunit protein uS12, found in Streptococcus uberis (strain ATCC BAA-854 / 0140J).